Here is a 175-residue protein sequence, read N- to C-terminus: MKNLHALMPACLLLTASAMAAPSNIGSAGDIHFTITIKAATCELENDSIDVNMETVVLQRPVKVGKELNQKNFSIGLKDCAYATKASVTMDGSPDPTDPSLFALDSGGATGVALKIKTSGGEQQYPSSTDSTPVEHTVWFDGTNKLNYIASYVPVKPDATVGTANATVNFSVTYE.

Positions 1–20 are cleaved as a signal peptide; sequence MKNLHALMPACLLLTASAMA.

This sequence belongs to the fimbrial protein family.

The protein resides in the fimbrium. The sequence is that of Protein LpfE (lpfE) from Salmonella typhimurium (strain LT2 / SGSC1412 / ATCC 700720).